Reading from the N-terminus, the 213-residue chain is MNTRTKKLPPLRVGIGGPVGSGKTTLLEMLCKAMRAHYDLVVITNDIYTKEDQRLLTVAEALPPERIMGVETGGCPHTAIREDASINLEAVDRMLRQFPEADIVFIESGGDNLAATFSPELSDLTIYVIDVAGGEKIPRKGGPGITKSDLLVVNKTDLAPYVGANLSIMEADTQRMRAHKPYVMGSVKSGKGLREVIDFITERGLLPPMPAQG.

A GTP-binding site is contributed by 17 to 24 (GPVGSGKT).

It belongs to the SIMIBI class G3E GTPase family. UreG subfamily. In terms of assembly, homodimer. UreD, UreF and UreG form a complex that acts as a GTP-hydrolysis-dependent molecular chaperone, activating the urease apoprotein by helping to assemble the nickel containing metallocenter of UreC. The UreE protein probably delivers the nickel.

It localises to the cytoplasm. In terms of biological role, facilitates the functional incorporation of the urease nickel metallocenter. This process requires GTP hydrolysis, probably effectuated by UreG. The sequence is that of Urease accessory protein UreG from Delftia acidovorans (strain DSM 14801 / SPH-1).